The following is a 174-amino-acid chain: NADH-ubiquinone oxidoreductase chain 6 (174 aa).

Helical transmembrane passes span 25–45 (SMGL…SIYV), 48–68 (FWFS…LFIY), 82–102 (FSLT…FFMI), and 143–163 (LITL…VKIT).

Belongs to the complex I subunit 6 family.

Its subcellular location is the mitochondrion membrane. The catalysed reaction is a ubiquinone + NADH + 5 H(+)(in) = a ubiquinol + NAD(+) + 4 H(+)(out). Functionally, core subunit of the mitochondrial membrane respiratory chain NADH dehydrogenase (Complex I) that is believed to belong to the minimal assembly required for catalysis. Complex I functions in the transfer of electrons from NADH to the respiratory chain. The immediate electron acceptor for the enzyme is believed to be ubiquinone. In Anopheles albimanus (New world malaria mosquito), this protein is NADH-ubiquinone oxidoreductase chain 6 (ND6).